A 277-amino-acid chain; its full sequence is Large ribosomal subunit protein uL2 (277 aa).

The segment at 222-277 is disordered; it reads GVAMNPVDHPHGGGEGRTSGGRHPVSPWGKSTKGKRTRSNKATDKFIMHTRHQRKK.

It belongs to the universal ribosomal protein uL2 family. As to quaternary structure, part of the 50S ribosomal subunit. Forms a bridge to the 30S subunit in the 70S ribosome.

Functionally, one of the primary rRNA binding proteins. Required for association of the 30S and 50S subunits to form the 70S ribosome, for tRNA binding and peptide bond formation. It has been suggested to have peptidyltransferase activity; this is somewhat controversial. Makes several contacts with the 16S rRNA in the 70S ribosome. The chain is Large ribosomal subunit protein uL2 from Bartonella quintana (strain Toulouse) (Rochalimaea quintana).